The chain runs to 148 residues: MKVELKVKPIENGTVIDHIESSKALKVYDLLKINESMPVTLALNVSSKKGSLKDILKIEGLALSKADVNKIALVSPNATINIIKDGKVVSKFKVGIPNKIDGIVKCTNPNCITNKEGIKSKFTVEQKDTLKIRCDYCEKFINSIIISR.

Zn(2+)-binding residues include Cys-106, Cys-111, Cys-134, and Cys-137.

The protein belongs to the PyrI family. In terms of assembly, contains catalytic and regulatory chains. It depends on Zn(2+) as a cofactor.

Involved in allosteric regulation of aspartate carbamoyltransferase. This is Aspartate carbamoyltransferase regulatory chain from Methanococcus vannielii (strain ATCC 35089 / DSM 1224 / JCM 13029 / OCM 148 / SB).